A 666-amino-acid polypeptide reads, in one-letter code: Endogenous retrovirus group K member 9 Gag polyprotein (666 aa).

Residue G2 is the site of N-myristoyl glycine attachment. Positions G165–L264 are disordered. Residues G232–P247 are compositionally biased toward pro residues. CCHC-type zinc fingers lie at residues G544–V561 and D580–S597. Residues K598–L641 are disordered. The span at Q604–G622 shows a compositional bias: polar residues. Low complexity predominate over residues F624–P640.

Belongs to the beta type-B retroviral Gag protein family. HERV class-II K(HML-2) gag subfamily. Myristoylation is essential for retroviral assembly. Alteration of the glycine residue leads to a block in the budding of particles and an accumulation of Gag inside the cell. In terms of processing, specific enzymatic cleavages may yield mature proteins.

It is found in the cell membrane. In terms of biological role, the products of the Gag polyproteins of infectious retroviruses perform highly complex orchestrated tasks during the assembly, budding, maturation, and infection stages of the viral replication cycle. During viral assembly, the proteins form membrane associations and self-associations that ultimately result in budding of an immature virion from the infected cell. Gag precursors also function during viral assembly to selectively bind and package two plus strands of genomic RNA. Endogenous Gag proteins may have kept, lost or modified their original function during evolution. The chain is Endogenous retrovirus group K member 9 Gag polyprotein (ERVK-9) from Homo sapiens (Human).